Here is a 351-residue protein sequence, read N- to C-terminus: tRNA pseudouridine synthase D (351 aa).

D81 functions as the Nucleophile in the catalytic mechanism. A TRUD domain is found at 158-304; sequence GVPNYFGSQR…MRHERRAIEL (147 aa).

It belongs to the pseudouridine synthase TruD family.

It catalyses the reaction uridine(13) in tRNA = pseudouridine(13) in tRNA. Its function is as follows. Responsible for synthesis of pseudouridine from uracil-13 in transfer RNAs. The polypeptide is tRNA pseudouridine synthase D (Aliivibrio fischeri (strain MJ11) (Vibrio fischeri)).